Reading from the N-terminus, the 251-residue chain is Homeobox protein notochord (251 aa).

Residues 1–14 (MPSPRPRGSPPPAP) are compositionally biased toward pro residues. A disordered region spans residues 1–47 (MPSPRPRGSPPPAPSGSRVRPPRSGRSPAPRSPTGPNTPRAPGRFES). Low complexity predominate over residues 15–35 (SGSRVRPPRSGRSPAPRSPTG). Residues 156–215 (QKRVRTMFNLEQLEELEKVFAKQHNLVGKKRAQLAARLKLTENQVRVWFQNRRVKYQKQQ) constitute a DNA-binding region (homeobox). Positions 224–242 (AEAASLDEPSSSSIASIQS) are enriched in low complexity. Residues 224–251 (AEAASLDEPSSSSIASIQSDDAESGVDG) are disordered.

The protein resides in the nucleus. Transcription regulator acting downstream of both FOXA2 and Brachyury (T) during notochord development. Required for node morphogenesis. Is essential for cilia formation in the posterior notochord (PNC) and for left-right patterning; acts upstream of FOXJ1 and RFX3 in this process and is required for the expression of various components important for axonemal assembly and function. Plays a role in regulating axial versus paraxial cell fate. Activates the transcription of ciliary proteins C11orf97 homolog, FAM183B and SPACA9 in the embryonic ventral node. This is Homeobox protein notochord (NOTO) from Homo sapiens (Human).